The chain runs to 190 residues: Peptidyl-tRNA hydrolase (190 aa).

Tyr14 is a binding site for tRNA. The Proton acceptor role is filled by His19. The tRNA site is built by Tyr64, Asn66, and Asn112.

The protein belongs to the PTH family. In terms of assembly, monomer.

Its subcellular location is the cytoplasm. It catalyses the reaction an N-acyl-L-alpha-aminoacyl-tRNA + H2O = an N-acyl-L-amino acid + a tRNA + H(+). In terms of biological role, hydrolyzes ribosome-free peptidyl-tRNAs (with 1 or more amino acids incorporated), which drop off the ribosome during protein synthesis, or as a result of ribosome stalling. Its function is as follows. Catalyzes the release of premature peptidyl moieties from peptidyl-tRNA molecules trapped in stalled 50S ribosomal subunits, and thus maintains levels of free tRNAs and 50S ribosomes. This chain is Peptidyl-tRNA hydrolase, found in Pelodictyon phaeoclathratiforme (strain DSM 5477 / BU-1).